Consider the following 252-residue polypeptide: MADAEKNAVAEKNNAVATKEVLAEAAAILEPVGLQEEAELPAKIMEEFMRNSRKKDKLLCSQLQVVNFLQTFLAQEDTEQSPDALASEDASRQKATETKEQWKDMKATYMDHVDVIKCALSEALPQVKEAHRKYTELQKAFEQLEAKKRVLEEKLQLAQKQWVLQQKRLQNLTKISAEVKRRRKRALEKLDGSHQELETLKQQAGQEQEKLQRNQSYLQLLCSLQNKLVISEGKAEDKDVKGRALTAKSKSP.

Residues 80–99 form a disordered region; the sequence is QSPDALASEDASRQKATETK. Positions 89 to 99 are enriched in basic and acidic residues; sequence DASRQKATETK. Positions 120–221 form a coiled coil; it reads LSEALPQVKE…QRNQSYLQLL (102 aa). Residues S216 and S249 each carry the phosphoserine modification.

In terms of assembly, component of the KNL1 complex composed of KNL1 and ZWINT. Part of the ten-subunit outer kinetochore KMN network that includes the KNL1, MIS12 and NDC80 complexes; a bioriented kinetochore contains approximately 150 copies of the network. Interacts with the MIS12 complex subunits MIS12 DSN1, and PMF1. Interacts with the NDC80 complex subunit NDC80 during mitosis. Interacts with ZW10. Interacts with CETN3.

Its subcellular location is the nucleus. The protein localises to the chromosome. The protein resides in the centromere. It is found in the kinetochore. In terms of biological role, acts as a component of the outer kinetochore KNL1 complex that serves as a docking point for spindle assembly checkpoint components and mediates microtubule-kinetochore interactions. Kinetochores, consisting of a centromere-associated inner segment and a microtubule-contacting outer segment, play a crucial role in chromosome segregation by mediating the physical connection between centromeric DNA and spindle microtubules. The outer kinetochore is made up of the ten-subunit KMN network, comprising the MIS12, NDC80 and KNL1 complexes, and auxiliary microtubule-associated components; together they connect the outer kinetochore with the inner kinetochore, bind microtubules, and mediate interactions with mitotic checkpoint proteins that delay anaphase until chromosomes are bioriented on the spindle. Targets the RZZ complex to the kinetochore at prometaphase. Recruits MAD2L1 to the kinetochore, but is not required for BUB1B localization. In addition to orienting mitotic chromosomes, it is also essential for alignment of homologous chromosomes during meiotic metaphase I. In meiosis I, required to activate the spindle assembly checkpoint at unattached kinetochores to correct erroneous kinetochore-microtubule attachments. This Mus musculus (Mouse) protein is Outer kinetochore KNL1 complex subunit ZWINT (Zwint).